Consider the following 893-residue polypeptide: MSDSTQMEANAAINEIKKRTRKLDQSLQMRFCADQFFIGNHCTKLASGKSIIISQNSKNRICLRFFMAADPLVGYTGRDFGIAFNQIDHISLKDEQQENPAVLICTLNLSSYTKMCKLQTGLKDVVEKPFLYNKSLARNLTFILKPWNDDPDTFVKISYNDEHREYVHSYDYDVAKSLMFKEVQAVWEQSLKEQLQRRHQTGRVYLTSQLSEMTPREWVQFLADQKLSKIVCHNGSIQYARVEDNPHGRKHTAVATNGFDHRGTRVLNSFGKAHASLATQEKSYAKKRKLTEQSLKLIYRNDRSVWLEGSCAKNLKMPKINSEPNMGEFMGWPDMDNAMTHPTSNFENEDVMKSTKQPNDFVSFEQLQAPPPVLQRQNGAIYSTQSVAFTHISGNDGVEDLTEKISHLGEEAYNIDMANALHAFSDNWHYEIHPNTVHNASFEQLHIGDGNSSIGTIGFNPLEPYPQSSFPQSNNWQQAHGDFTFPQVSFPNTQQGSCLPSTPTAALPPTRPVVEKIPPDTQLFTFPPSGSCTTGMDPVVLLVKDIKTLDRKEFLNDSVMAFMLNYIAFMLSSELMKSVHMCNTFLFVNLTRLLPPLCFSKRRPIEPEHIKIVKDNCPRVLRWTRKFDVLAKDYIIIPINEDLHWLVIAVINPSGAIVDMSNEEASRAAPKCYIVFFDPLSGLDPSKKNHMCHCIKIYLAQLYENTKAPGMKFASKNPTIYDEERVVVTRAENTPIQDNFYDCGLYVLHFIEGLFCYPNRPVNVNDFPNFDWSKFFPEANKMCDLMRDKVYNLILQQADKPARSRLAKFERENKCGLSREGALRKARRHSAVNERRTKRHRDYYARHYSLSPPHRNVMNDDPTFMNPRGLAEMPITRLVRRLRIPEDNFPIAY.

Residues 538–800 (PVVLLVKDIK…YNLILQQADK (263 aa)) are protease. Residues His644, Asp678, and Cys743 contribute to the active site.

The protein belongs to the peptidase C48 family.

It localises to the nucleus. It is found in the cytoplasm. Its subcellular location is the cytosol. Its function is as follows. Protease that catalyzes two essential functions in the smo-1 pathway: processing of full-length smo-1 to their mature forms and deconjugation of smo-1 from targeted proteins. May deconjugate smo-1 from the cadherin protein hmr-1 and plays a role in its recruitment to and the maintenance of adherens junctions. Required for epidermal morphogenesis during embryonic development. The polypeptide is Ubiquitin-like protease 2 (Caenorhabditis elegans).